The chain runs to 324 residues: tRNA dimethylallyltransferase (324 aa).

Residue 20–27 (GPTASGKS) coordinates ATP. A substrate-binding site is contributed by 22-27 (TASGKS). Interaction with substrate tRNA stretches follow at residues 45 to 48 (DSAL), 168 to 172 (QRLIR), and 284 to 291 (KRQITWLR).

The protein belongs to the IPP transferase family. As to quaternary structure, monomer. Requires Mg(2+) as cofactor.

The enzyme catalyses adenosine(37) in tRNA + dimethylallyl diphosphate = N(6)-dimethylallyladenosine(37) in tRNA + diphosphate. Catalyzes the transfer of a dimethylallyl group onto the adenine at position 37 in tRNAs that read codons beginning with uridine, leading to the formation of N6-(dimethylallyl)adenosine (i(6)A). The chain is tRNA dimethylallyltransferase from Hydrogenovibrio crunogenus (strain DSM 25203 / XCL-2) (Thiomicrospira crunogena).